The sequence spans 222 residues: PLASMODESMATA CALLOSE-BINDING PROTEIN 4 (222 aa).

An N-terminal signal peptide occupies residues 1–19; sequence MSVLLPLCLIISMFTYSNA. C22 and C83 are joined by a disulfide. Over residues 88 to 187 the composition is skewed to low complexity; sequence AASPSTTPPS…SVFPGTTLGP (100 aa). The disordered stretch occupies residues 88-199; sequence AASPSTTPPS…SGGLGDPNAG (112 aa). Residue N197 is the site of GPI-anchor amidated asparagine attachment. A propeptide spans 198–222 (removed in mature form); the sequence is AGEKLSVRTNTVVFLLTGVAAMLVI.

In terms of processing, contains two additional disulfide bonds.

It localises to the cell membrane. The protein resides in the cell junction. Its subcellular location is the plasmodesma. The chain is PLASMODESMATA CALLOSE-BINDING PROTEIN 4 (PDCB4) from Arabidopsis thaliana (Mouse-ear cress).